Reading from the N-terminus, the 554-residue chain is Developmental and secondary metabolism regulator ve-1 (554 aa).

The region spanning 31–230 (GRKLWYSLRV…AEQGCRVRIR (200 aa)) is the Velvet domain. Positions 45–50 (LRARAC) match the Nuclear localization signal motif. A compositionally biased stretch (basic and acidic residues) spans 166–175 (TKEDKDKDPE). Disordered stretches follow at residues 166-190 (TKEDKDKDPEEPNAPPDGSPGSFDF), 232-430 (DVRM…PHRL), and 465-528 (PRAY…VDDK). The span at 276 to 292 (RSMSGSTERTPYSSISD) shows a compositional bias: polar residues. 2 stretches are compositionally biased toward pro residues: residues 363–372 (SYPPPPPPHQ) and 485–494 (LPPPPPPPPQ). Residues 455 to 487 (SPSNMAAPPYPRAYSVSNSGGLTSAGGYNQLPP) form a PEST region. A compositionally biased stretch (basic and acidic residues) spans 500 to 528 (RAHDQTFRADPEMRRYQDGARERESVDDK).

Belongs to the velvet family. VeA subfamily. Component of the heterotrimeric velvet complex composed of lae-1, ve-1 and vel-2; Ve-1 acting as a bridging protein between lae-1 and vel-2.

The protein resides in the nucleus. Its subcellular location is the cytoplasm. Its function is as follows. Component of the velvet transcription factor complex that controls sexual/asexual developmental ratio in response to light, promoting sexual development in the darkness while stimulating asexual sporulation under illumination. The velvet complex hat acts as a global regulator for secondary metabolite gene expression. In Neurospora crassa (strain ATCC 24698 / 74-OR23-1A / CBS 708.71 / DSM 1257 / FGSC 987), this protein is Developmental and secondary metabolism regulator ve-1.